The following is a 332-amino-acid chain: MIITVLGAGSWGTTLAVLLANKGYAVSLWAHRPDFAQELARTRENVKYLPGVTFPDGLEIAQDINAAATDADVIVAAVPSQAVRETMELLAGINLDGKLMVNVAKGIELGSGKRLSEVILETLSGVDPSMVSVLYGPSHAEEVSGLQPTTVVAASSNLDTAKRVQEIFHTRMFRVYVNTDIVGVEIAGSVKNIIAIAAGIADGIGFGDNAKAAIITRGLAEISRLSAAMGGDPMTVSGLSGIGDLVVTCLSKHSRNRYVGEQIGKGRSLDDVISHMNMVAEGVLTTKAVVELSNRLGVDMPITRTVYAMLFEHKPVEDAILDLMTRDPKPEL.

The NADPH site is built by serine 10, tryptophan 11, histidine 31, arginine 32, and lysine 105. Sn-glycerol 3-phosphate-binding residues include lysine 105, glycine 136, and serine 138. Residue alanine 140 coordinates NADPH. 5 residues coordinate sn-glycerol 3-phosphate: lysine 191, aspartate 244, serine 254, arginine 255, and asparagine 256. Lysine 191 serves as the catalytic Proton acceptor. Position 255 (arginine 255) interacts with NADPH. NADPH is bound by residues valine 279 and glutamate 281.

It belongs to the NAD-dependent glycerol-3-phosphate dehydrogenase family.

The protein resides in the cytoplasm. It carries out the reaction sn-glycerol 3-phosphate + NAD(+) = dihydroxyacetone phosphate + NADH + H(+). The enzyme catalyses sn-glycerol 3-phosphate + NADP(+) = dihydroxyacetone phosphate + NADPH + H(+). It participates in membrane lipid metabolism; glycerophospholipid metabolism. Its function is as follows. Catalyzes the reduction of the glycolytic intermediate dihydroxyacetone phosphate (DHAP) to sn-glycerol 3-phosphate (G3P), the key precursor for phospholipid synthesis. This chain is Glycerol-3-phosphate dehydrogenase [NAD(P)+], found in Prosthecochloris aestuarii (strain DSM 271 / SK 413).